The chain runs to 349 residues: Succinylglutamate desuccinylase (349 aa).

Zn(2+)-binding residues include histidine 70, glutamate 73, and histidine 166. Glutamate 229 is a catalytic residue.

It belongs to the AspA/AstE family. Succinylglutamate desuccinylase subfamily. Zn(2+) serves as cofactor.

The enzyme catalyses N-succinyl-L-glutamate + H2O = L-glutamate + succinate. It functions in the pathway amino-acid degradation; L-arginine degradation via AST pathway; L-glutamate and succinate from L-arginine: step 5/5. Functionally, transforms N(2)-succinylglutamate into succinate and glutamate. This is Succinylglutamate desuccinylase from Burkholderia mallei (strain ATCC 23344).